Reading from the N-terminus, the 243-residue chain is Uridine-cytidine kinase B (243 aa).

ATP is bound at residue 22–29 (GGTASGKT).

The protein belongs to the uridine kinase family.

It catalyses the reaction uridine + ATP = UMP + ADP + H(+). The catalysed reaction is cytidine + ATP = CMP + ADP + H(+). Its pathway is pyrimidine metabolism; CTP biosynthesis via salvage pathway; CTP from cytidine: step 1/3. The protein operates within pyrimidine metabolism; UMP biosynthesis via salvage pathway; UMP from uridine: step 1/1. Catalyzes the conversion of uridine into uridine monophosphate and cytidine into cytidine monophosphate in the pyrimidine salvage pathway. The polypeptide is Uridine-cytidine kinase B (udkB) (Dictyostelium discoideum (Social amoeba)).